The sequence spans 357 residues: Probable 3'(2'),5'-bisphosphate nucleotidase 3 (357 aa).

Residue Asp46 is the Proton acceptor of the active site. Mg(2+) contacts are provided by Glu71, Asp135, and Ile137. Residue Thr140 is the Proton acceptor of the active site. Adenosine 3',5'-bisphosphate contacts are provided by Thr140, Ser256, Lys259, and Arg273. Ser256, Lys259, and Arg273 together coordinate AMP.

This sequence belongs to the inositol monophosphatase superfamily. Mg(2+) is required as a cofactor.

The catalysed reaction is 3'-phosphoadenylyl sulfate + H2O = adenosine 5'-phosphosulfate + phosphate. It catalyses the reaction adenosine 3',5'-bisphosphate + H2O = AMP + phosphate. It carries out the reaction adenosine 2',5'-bisphosphate + H2O = AMP + phosphate. The enzyme catalyses 1D-myo-inositol 1,4-bisphosphate + H2O = 1D-myo-inositol 4-phosphate + phosphate. The catalysed reaction is 1D-myo-inositol 1,3,4-trisphosphate + H2O = 1D-myo-inositol 3,4-bisphosphate + phosphate. The protein operates within signal transduction; phosphatidylinositol signaling pathway. Its function is as follows. Phosphatase that converts adenosine 3'-phosphate 5'-phosphosulfate (PAPS) to adenosine 5'-phosphosulfate (APS) and 3'(2')-phosphoadenosine 5'-phosphate (PAP) to AMP. Is also able to hydrolyze inositol 1,4-bisphosphate and inositol 1,3,4-trisphosphate. This chain is Probable 3'(2'),5'-bisphosphate nucleotidase 3 (SAL3), found in Arabidopsis thaliana (Mouse-ear cress).